Consider the following 466-residue polypeptide: VGFKAGVKEYKLTYYTPEYETKDTDILAAFRVTPQPGVPPEEAGAAVAAESSTGTWTTVWTDGLTSLDRYKGRCYNIEPVLGETDQYICYVAYPLDLFEEGSVTNMFTSIVGNVFGFKALRALRLEDLRIPPAYIKTFQGPPHGIQSERDKLNKYGRPLLGCTIKPKLGLSAKNYGRACYECLRGGLDFTKDDENVNSQPFMRWRDRFLFCAEAIYKSQAETGEIKGHYLNATAGTCEEMIKRAVFARELGVPIVMHDYLTGGFTANTSLAHYCRDNGLLLHIHRAMHAVIDRQKNHGMHFRVLAKALRLSGGDHIHSGTVVGKLEGERDITLGFVDLLRDDFVEQDRSRGIYFTQDWVSLPGVIPVASGGIHVWHMPALTEIFGDDSVLQFGGGTLGHPWGNAPGAVANRVAVEACVQARNEGRDLAAEGNEIIREASKWSPELAAACEVWKAIKFEFRAVDTLD.

K4 carries the N6,N6,N6-trimethyllysine modification. N113 and T163 together coordinate substrate. K165 functions as the Proton acceptor in the catalytic mechanism. K167 is a substrate binding site. K191, D193, and E194 together coordinate Mg(2+). K191 carries the N6-carboxylysine modification. The active-site Proton acceptor is the H284. Positions 285, 317, and 369 each coordinate substrate.

Belongs to the RuBisCO large chain family. Type I subfamily. As to quaternary structure, heterohexadecamer of 8 large chains and 8 small chains; disulfide-linked. The disulfide link is formed within the large subunit homodimers. It depends on Mg(2+) as a cofactor. Post-translationally, the disulfide bond which can form in the large chain dimeric partners within the hexadecamer appears to be associated with oxidative stress and protein turnover.

It localises to the plastid. It is found in the chloroplast. The catalysed reaction is 2 (2R)-3-phosphoglycerate + 2 H(+) = D-ribulose 1,5-bisphosphate + CO2 + H2O. The enzyme catalyses D-ribulose 1,5-bisphosphate + O2 = 2-phosphoglycolate + (2R)-3-phosphoglycerate + 2 H(+). In terms of biological role, ruBisCO catalyzes two reactions: the carboxylation of D-ribulose 1,5-bisphosphate, the primary event in carbon dioxide fixation, as well as the oxidative fragmentation of the pentose substrate in the photorespiration process. Both reactions occur simultaneously and in competition at the same active site. The protein is Ribulose bisphosphate carboxylase large chain of Ruttya fruticosa (African azalea).